Consider the following 436-residue polypeptide: bZIP transcription factor RISBZ1 (436 aa).

The interval 1–27 (MEHVFAVDEIPDPLWAPPPPVQPAAAA) is required for transactivation activity. Residues 182–258 (LSPGPNGGSG…SARRSRSRKA (77 aa)) form a disordered region. Acidic residues predominate over residues 215–225 (PSEDDDMEGDA). Residues 236-299 (EDKVKKRKES…SAAAIDNRVL (64 aa)) form the bZIP domain. Positions 238–257 (KVKKRKESNRESARRSRSRK) are basic motif. A leucine-zipper region spans residues 264 to 278 (LEEQVSLLRVENSSL).

In terms of assembly, homodimer. Forms heterodimers with RISBZ2/BZP33 and RISBZ3/BZP20. Interacts with DOF3/RPBF. As to expression, specifically expressed in seeds. Expressed in aleurone and subaleurone layers of maturing seeds, but not in the embryo tissues.

The protein localises to the nucleus. Its function is as follows. Transcriptional activator that binds to the DNA specific sequence 5'-TGAGTCA-3' found in seed storage protein gene promoters. Involved in the endosperm-specific regulation of storage protein genes. Can activate the expression of genes encoding for the seed storage proteins glutelin, prolamin, globulin and the allergen RAG1. Functions synergistically with DOF3/RPBF to positively regulate quantitatively many seed storage protein genes. Functions synergistically with DOF3/RPBF to positively regulate some metabolic enzymes, such as alanine aminotransferase and pyruvate phosphate dikinase, that are expressed in developing seeds. Functions synergistically with DOF3/RPBF to positively regulate genes that are key players in the development of aleurone layers. Functions synergistically with DOF3/RPBF to positively regulate the glutelin GLUD-1 gene in endosperm of developing seeds. Can activate the expression of the bifunctional lysine-degrading enzyme, lysine ketoglutarate reductase/saccharopine dehydrogenase (LKR/SDH), one of the key regulators determining free lysine content in plants. Functions as a key regulator of starch synthesis in seeds, by direct binding to the promoters of starch-synthesizing genes, such as AGPL3, WAXXY and SBE1. This is bZIP transcription factor RISBZ1 from Oryza sativa subsp. japonica (Rice).